The primary structure comprises 870 residues: Probable disease resistance protein At1g59620 (870 aa).

In terms of domain architecture, NB-ARC spans 123–432 (DKRNMRQTFS…AAEGMPRPRY (310 aa)). 167-174 (GMGGIGKT) serves as a coordination point for ATP. LRR repeat units follow at residues 543 to 567 (LQLMRVLDLHGVEFGGELPSSIGLL), 568 to 590 (IHLRYLSLYRAKASHLPSSMQNL), 703 to 726 (MSGIEGLVLDCDQLKHLNLRIYMP), 735 to 758 (PWHLRNISLAECCLKEDPMPILEK), 759 to 786 (LLQLNEVSLSHQSFCGKRMVCSDGGFPQ), and 808 to 833 (MPRLHKLTIRNDPKLKELPDGLKFIT).

This sequence belongs to the disease resistance NB-LRR family.

In terms of biological role, probable disease resistance protein. The sequence is that of Probable disease resistance protein At1g59620 from Arabidopsis thaliana (Mouse-ear cress).